Here is an 89-residue protein sequence, read N- to C-terminus: Cell division protein ZapA (89 aa).

Belongs to the ZapA family. Type 2 subfamily. In terms of assembly, homodimer. Interacts with FtsZ.

It is found in the cytoplasm. Activator of cell division through the inhibition of FtsZ GTPase activity, therefore promoting FtsZ assembly into bundles of protofilaments necessary for the formation of the division Z ring. It is recruited early at mid-cell but it is not essential for cell division. This is Cell division protein ZapA from Bacillus mycoides (strain KBAB4) (Bacillus weihenstephanensis).